The sequence spans 375 residues: Myb family transcription factor PHL5 (375 aa).

Polar residues predominate over residues 159–171 (TSSQHQPKQSHPR). The interval 159 to 178 (TSSQHQPKQSHPRFSSPPSF) is disordered. An HTH myb-type domain is found at 189–249 (CVNKTRIRWT…HLQKYRIAKY (61 aa)). Positions 220–245 (PKAILKRMDSDGLTIFHVKSHLQKYR) form a DNA-binding region, H-T-H motif. Residues 279 to 299 (KEALQLQLDVQRHLHEQLEIQ) are a coiled coil. Positions 292–297 (LHEQLE) match the LHEQLE motif.

It belongs to the MYB-CC family.

Its subcellular location is the nucleus. The sequence is that of Myb family transcription factor PHL5 from Arabidopsis thaliana (Mouse-ear cress).